The primary structure comprises 90 residues: DNA-directed RNA polymerase subunit omega (90 aa).

The interval R69 to R90 is disordered.

Belongs to the RNA polymerase subunit omega family. The RNAP catalytic core consists of 2 alpha, 1 beta, 1 beta' and 1 omega subunit. When a sigma factor is associated with the core the holoenzyme is formed, which can initiate transcription.

The enzyme catalyses RNA(n) + a ribonucleoside 5'-triphosphate = RNA(n+1) + diphosphate. Promotes RNA polymerase assembly. Latches the N- and C-terminal regions of the beta' subunit thereby facilitating its interaction with the beta and alpha subunits. This is DNA-directed RNA polymerase subunit omega from Vibrio vulnificus (strain CMCP6).